Reading from the N-terminus, the 260-residue chain is Phosphoribosylaminoimidazole-succinocarboxamide synthase (260 aa).

Belongs to the SAICAR synthetase family.

It catalyses the reaction 5-amino-1-(5-phospho-D-ribosyl)imidazole-4-carboxylate + L-aspartate + ATP = (2S)-2-[5-amino-1-(5-phospho-beta-D-ribosyl)imidazole-4-carboxamido]succinate + ADP + phosphate + 2 H(+). The protein operates within purine metabolism; IMP biosynthesis via de novo pathway; 5-amino-1-(5-phospho-D-ribosyl)imidazole-4-carboxamide from 5-amino-1-(5-phospho-D-ribosyl)imidazole-4-carboxylate: step 1/2. In Pelagibacter ubique (strain HTCC1062), this protein is Phosphoribosylaminoimidazole-succinocarboxamide synthase.